The following is a 520-amino-acid chain: Ribonuclease Y (520 aa).

Residues 3 to 23 (IEIAIVLILAAAGLGYFVGNM) traverse the membrane as a helical segment. The KH domain maps to 210–273 (SVSVVALPSD…EVAKIALEKL (64 aa)). The 94-residue stretch at 336–429 (VYQHSLEVAF…VQAADALSGA (94 aa)) folds into the HD domain.

It belongs to the RNase Y family.

It localises to the cell membrane. Functionally, endoribonuclease that initiates mRNA decay. The chain is Ribonuclease Y from Geobacter metallireducens (strain ATCC 53774 / DSM 7210 / GS-15).